The following is a 620-amino-acid chain: UvrABC system protein C (620 aa).

Positions 13–92 constitute a GIY-YIG domain; that stretch reads DKPGVYIMKN…IKKYSPRYNI (80 aa). Positions 204–239 constitute a UVR domain; the sequence is TSIIKKLKLEMEKAAEELEFEKAAKIRDRILAIELI.

Belongs to the UvrC family. As to quaternary structure, interacts with UvrB in an incision complex.

Its subcellular location is the cytoplasm. Functionally, the UvrABC repair system catalyzes the recognition and processing of DNA lesions. UvrC both incises the 5' and 3' sides of the lesion. The N-terminal half is responsible for the 3' incision and the C-terminal half is responsible for the 5' incision. This is UvrABC system protein C from Clostridium perfringens (strain ATCC 13124 / DSM 756 / JCM 1290 / NCIMB 6125 / NCTC 8237 / Type A).